A 208-amino-acid polypeptide reads, in one-letter code: MARYTGPSCRLCRRENMELFLKGERCYTDKCAIKRRNYPPGQHGQGRPKVSNYGIQLREKQKVRRIYGVLEKQFRSYFEEADRMRGVTGENLLSLLERRLDNVVYRLGFASSRTEARILVRHNHFTLNGRKANIPSIQLKAGDVVVLKEKSRKIACINESLDAVVRRGTPQWLELDKEGYKGVVKLLPAREDIAMPIQEQLIVELYSK.

The region spanning 98-158 (RRLDNVVYRL…EKSRKIACIN (61 aa)) is the S4 RNA-binding domain.

Belongs to the universal ribosomal protein uS4 family. As to quaternary structure, part of the 30S ribosomal subunit. Contacts protein S5. The interaction surface between S4 and S5 is involved in control of translational fidelity.

One of the primary rRNA binding proteins, it binds directly to 16S rRNA where it nucleates assembly of the body of the 30S subunit. Functionally, with S5 and S12 plays an important role in translational accuracy. The chain is Small ribosomal subunit protein uS4 from Geobacter metallireducens (strain ATCC 53774 / DSM 7210 / GS-15).